Here is a 593-residue protein sequence, read N- to C-terminus: Bifunctional purine biosynthesis protein ATIC (593 aa).

The MGS-like domain occupies 1–147 (MAARQQLALL…KNHARVTVVC (147 aa)). Residues 1–199 (MAARQQLALL…ISDYFRKEYS (199 aa)) form an IMP cyclohydrolase region. IMP contacts are provided by residues 13-15 (SEK), 35-38 (SGGT), 65-68 (RVKT), 102-103 (CN), and 126-127 (DI). The Proton donor/acceptor; for FAICAR cyclization activity role is filled by K138. K200 is subject to N6-acetyllysine. An AICAR formyltransferase region spans residues 200–593 (KGVSQLPLRY…IHTNLRLFHH (394 aa)). 5-amino-1-(5-phospho-beta-D-ribosyl)imidazole-4-carboxamide-binding positions include 208-209 (RY), H268, G317, D340, N432, and R452. The active-site Proton acceptor; for AICAR formyltransferase activity is the H268. A (6R)-10-formyltetrahydrofolate-binding site is contributed by I453. F542 contributes to the 5-amino-1-(5-phospho-beta-D-ribosyl)imidazole-4-carboxamide binding site. (6R)-10-formyltetrahydrofolate is bound by residues D547 and 566-567 (SA). R589 lines the 5-amino-1-(5-phospho-beta-D-ribosyl)imidazole-4-carboxamide pocket.

Belongs to the PurH family. As to quaternary structure, homodimer. Associates with internalized INSR complexes on Golgi/endosomal membranes. Interacts with INSR; ATIC together with PRKAA2/AMPK2 and HACD3/PTPLAD1 is proposed to be part of a signaling network regulating INSR autophosphorylation and endocytosis.

It is found in the cytoplasm. The protein resides in the cytosol. It carries out the reaction (6R)-10-formyltetrahydrofolate + 5-amino-1-(5-phospho-beta-D-ribosyl)imidazole-4-carboxamide = 5-formamido-1-(5-phospho-D-ribosyl)imidazole-4-carboxamide + (6S)-5,6,7,8-tetrahydrofolate. The catalysed reaction is 10-formyldihydrofolate + 5-amino-1-(5-phospho-beta-D-ribosyl)imidazole-4-carboxamide = 5-formamido-1-(5-phospho-D-ribosyl)imidazole-4-carboxamide + 7,8-dihydrofolate. The enzyme catalyses IMP + H2O = 5-formamido-1-(5-phospho-D-ribosyl)imidazole-4-carboxamide. It participates in purine metabolism; IMP biosynthesis via de novo pathway; 5-formamido-1-(5-phospho-D-ribosyl)imidazole-4-carboxamide from 5-amino-1-(5-phospho-D-ribosyl)imidazole-4-carboxamide (10-formyl THF route): step 1/1. The protein operates within purine metabolism; IMP biosynthesis via de novo pathway; IMP from 5-formamido-1-(5-phospho-D-ribosyl)imidazole-4-carboxamide: step 1/1. With respect to regulation, AMP and XMP inhibit AICAR formyltransferase activity. AICAR formyltransferase activity is competitively inhibited by 2-[5-hydroxy-3-methyl-1-(2-methyl-4-sulfo-phenyl)-1H-pyrazol-4-ylazo]-4-sulfo-benzoic acid (326203-A). FAICAR cyclization is competitively inhibited by 1,5-dihydroimidazo[4,5-c][1,2,6]thiadiazin-4(3H)-one-2,2-dioxide and the corresponding nucleoside and nucleoside monophosphate. Its function is as follows. Bifunctional enzyme that catalyzes the last two steps of purine biosynthesis. Acts as a transformylase that incorporates a formyl group to the AMP analog AICAR (5-amino-1-(5-phospho-beta-D-ribosyl)imidazole-4-carboxamide) to produce the intermediate formyl-AICAR (FAICAR). Can use both 10-formyldihydrofolate and 10-formyltetrahydrofolate as the formyl donor in this reaction. Also catalyzes the cyclization of FAICAR to inosine monophosphate (IMP). Promotes insulin receptor/INSR autophosphorylation and is involved in INSR internalization. This Gallus gallus (Chicken) protein is Bifunctional purine biosynthesis protein ATIC (ATIC).